Here is a 90-residue protein sequence, read N- to C-terminus: Small ribosomal subunit protein bS20 (90 aa).

It belongs to the bacterial ribosomal protein bS20 family.

Functionally, binds directly to 16S ribosomal RNA. The chain is Small ribosomal subunit protein bS20 from Francisella tularensis subsp. tularensis (strain FSC 198).